Consider the following 111-residue polypeptide: uncharacterized protein (111 aa).

Its subcellular location is the mitochondrion. This is an uncharacterized protein from Arabidopsis thaliana (Mouse-ear cress).